The chain runs to 426 residues: MTEFDLNQYMDRVGRQARAASRAIARASTADKNRALLTIAAAIRRDADQLKAVNARDVERARANGQDAAFVDRLTLSDKAIATMAAGLEQIAALPDPIGEISNMKFRPTGIQVGQMRVPLGVIGIIYESRPNVTIDAAALCLKSGNATILRGGSEAIESNTALAALVAEGLSAAGLPPEAVQVIETTDRAAVGRLITMTEFVDVIVPRGGKSLIARLMEEARVPMIKHLDGICHVYIDAEADLDKAVRVCDNAKTQRYAPCNTMETLLVSQDIAAAALPPLCRIYQQKGVELRVCPATRATLEAAGFSGLVDASEEDWRLEYLAPILAIKTVVGLDQAISHINEYGSHHTDSIITENYSAGMRFIREVDSASVMINASTRFADGFEYGLGAEIGISNDKLHARGPVGLEGLTSLKYVVFGHGEVRT.

It belongs to the gamma-glutamyl phosphate reductase family.

It is found in the cytoplasm. It catalyses the reaction L-glutamate 5-semialdehyde + phosphate + NADP(+) = L-glutamyl 5-phosphate + NADPH + H(+). It participates in amino-acid biosynthesis; L-proline biosynthesis; L-glutamate 5-semialdehyde from L-glutamate: step 2/2. Its function is as follows. Catalyzes the NADPH-dependent reduction of L-glutamate 5-phosphate into L-glutamate 5-semialdehyde and phosphate. The product spontaneously undergoes cyclization to form 1-pyrroline-5-carboxylate. The polypeptide is Gamma-glutamyl phosphate reductase (Cupriavidus taiwanensis (strain DSM 17343 / BCRC 17206 / CCUG 44338 / CIP 107171 / LMG 19424 / R1) (Ralstonia taiwanensis (strain LMG 19424))).